A 192-amino-acid polypeptide reads, in one-letter code: Pyridoxal 5'-phosphate synthase subunit PdxT (192 aa).

L-glutamine is bound at residue 46-48 (GES). Cys76 functions as the Nucleophile in the catalytic mechanism. Residues Arg103 and 131–132 (IR) each bind L-glutamine. Catalysis depends on charge relay system residues His167 and Glu169.

This sequence belongs to the glutaminase PdxT/SNO family. As to quaternary structure, in the presence of PdxS, forms a dodecamer of heterodimers. Only shows activity in the heterodimer.

The enzyme catalyses aldehydo-D-ribose 5-phosphate + D-glyceraldehyde 3-phosphate + L-glutamine = pyridoxal 5'-phosphate + L-glutamate + phosphate + 3 H2O + H(+). The catalysed reaction is L-glutamine + H2O = L-glutamate + NH4(+). The protein operates within cofactor biosynthesis; pyridoxal 5'-phosphate biosynthesis. Functionally, catalyzes the hydrolysis of glutamine to glutamate and ammonia as part of the biosynthesis of pyridoxal 5'-phosphate. The resulting ammonia molecule is channeled to the active site of PdxS. The polypeptide is Pyridoxal 5'-phosphate synthase subunit PdxT (Koribacter versatilis (strain Ellin345)).